The sequence spans 1482 residues: MQRSPLEKASIFSKLFFSWTRPILRKGYRQRLELSDIYHISSSDSADNLSEKLEREWDRELASKKNPKLINALRRCFFWRFMFYGIILYLGEVTKAVQPLLLGRIIASYDPDNKAERSIAIYLGVGLCLLFIVRTLLLHPAIFGPHHIGMQMRIAMFSLIYKKTLKLSSRVLDKISIGQLVSLLSNNLNKFDEGLALAHFVWIAPLQVTLLMGLLWELLQASAFCGLAFLVVLALFQAGLGKMMMKYRDQRAGKINERLVITSEMIENIQSVKAYCWEEAMEKMIENLRQTELKLTRKAAYVRYFNSSAFFFSGLFVVFLSVLPYALLKGIMLRKIFTTISFCIVLRMAVTRQFPWAVQTWYDSLGAINKIQDFLQKQEYKTLEYNLTTTEVVMENVTAFWEEGFGKLFEKAKQNNNSRKISNGDNSLFFSNFSLLGTPVLKDISFKIERGQLLAVAGSTGAGKTSLLMMIMGELEPSEGKIKHSGRISFCSQFSWIMPGTIKENIIFGVSYDEYRYRSVIKACQLEEDISKFAEKDNIVLGEGGITLSGGQRARISLARAVYKDADLYLLDSPFGYLDVLTEKEIFESCVCKLMANKTRILVTSKMEHLKKADKILILHEGSSYFYGTFSELQSQRPDFSSKLMGYDTFDQFTAERRNSIITETLRRFSLEGDASVSWNETKKQSFKQTGEFGEKRKNSILNSINSIRKFSIVQKTPLQMNGFEEDSGEPLERRLSLVPDSEHGEAILPRSNVINAGPTFQGRRRQSVLNLMTRSSVNQGQSIHRKTATSTRKMSLVPQANLTEIDIYSRRLSQDTGLEISEEINEEDLRECFFDDVESIPTVTTWNTYLRYVTVHKSLIFVLIWCLVVFLAEVAACLVVLCLLKKTSPQDKGNSTKGANNSYAVIITSTSAYYVFYIYVGVADGLLALGLFRGLPLVHTLITVSKILHRKMLHSVLQAPMSTLNTLKAGGILNRFSKDIAVLDDLLPLTIFDFIQLLLIVIGAVAVVSVLKPYIFLATVPVIVAFILLRAYFLHTSQQLKQLESEGRSPIFTHLITSLKGLWTLRAFGRQPYFETLFHKALNLHTANWFLYLSTLRWFQMRIEMIFVIFFIAVTFISILTTGEGEGTVGIILTLAMNIMSTLQWAVNSSIDVDSLMRSVSRVFKFIDMPAEGDQPNRSFKPSKDGQLSKVMIIENQHVKKDDIWPSGGQMTVKDLTAKYVDGGNAVLENISFSISPGQRVGLLGRTGSGKSTLLLAFLRLLNTEGEIQVDGVSWDSITLQQWRKAFGVIPQKVFIFSGTFRKNLDPYGQWNDQEIWKVAEEVGLRSVIEQFPGKLDFVLVDGGCVLSHGHKQLMCLARSVLGKAKILLLDEPSAHLDPITYQIIRRTLKQAFADCTVILSEHRIEAMLECQRFLVIEENKVRQYDSIQRLLSEKSLFRQAISPLDRLKLLPHRNSSKQRSRSKIAALKEETEEEVQETRL.

At 1–77 (MQRSPLEKAS…KLINALRRCF (77 aa)) the chain is on the cytoplasmic side. The helical transmembrane segment at 78-98 (FWRFMFYGIILYLGEVTKAVQ) threads the bilayer. In terms of domain architecture, ABC transmembrane type-1 1 spans 81 to 365 (FMFYGIILYL…WAVQTWYDSL (285 aa)). At 99-122 (PLLLGRIIASYDPDNKAERSIAIY) the chain is on the extracellular side. The helical transmembrane segment at 123–146 (LGVGLCLLFIVRTLLLHPAIFGPH) threads the bilayer. Over 147 to 195 (HIGMQMRIAMFSLIYKKTLKLSSRVLDKISIGQLVSLLSNNLNKFDEGL) the chain is Cytoplasmic. Residues 196 to 216 (ALAHFVWIAPLQVTLLMGLLW) form a helical membrane-spanning segment. At 217–222 (ELLQAS) the chain is on the extracellular side. Residues 223-243 (AFCGLAFLVVLALFQAGLGKM) form a helical membrane-spanning segment. Topologically, residues 244-298 (MMKYRDQRAGKINERLVITSEMIENIQSVKAYCWEEAMEKMIENLRQTELKLTRK) are cytoplasmic. The helical transmembrane segment at 299-319 (AAYVRYFNSSAFFFSGLFVVF) threads the bilayer. Over 320-339 (LSVLPYALLKGIMLRKIFTT) the chain is Extracellular. A helical membrane pass occupies residues 340–358 (ISFCIVLRMAVTRQFPWAV). At 359-859 (QTWYDSLGAI…YLRYVTVHKS (501 aa)) the chain is on the cytoplasmic side. Residues Trp-401, Ser-434, 458 to 465 (GSTGAGKT), and Gln-493 each bind ATP. Positions 423 to 646 (NGDNSLFFSN…RPDFSSKLMG (224 aa)) constitute an ABC transporter 1 domain. A lipid anchor (S-palmitoyl cysteine) is attached at Cys-524. Phosphoserine occurs at positions 549 and 660. A disordered R region region spans residues 654-832 (TAERRNSIIT…EEINEEDLRE (179 aa)). Ser-670 carries the post-translational modification Phosphoserine; by PKA. Ser-686 carries the phosphoserine modification. Residue Lys-688 forms a Glycyl lysine isopeptide (Lys-Gly) (interchain with G-Cter in ubiquitin) linkage. Ser-700 and Ser-712 each carry phosphoserine. Thr-717 bears the Phosphothreonine mark. Residues Ser-737, Ser-768, Ser-791, Ser-796, and Ser-814 each carry the phosphoserine modification. The chain crosses the membrane as a helical span at residues 860–880 (LIFVLIWCLVVFLAEVAACLV). The region spanning 860–1156 (LIFVLIWCLV…AVNSSIDVDS (297 aa)) is the ABC transmembrane type-1 2 domain. At 881 to 919 (VLCLLKKTSPQDKGNSTKGANNSYAVIITSTSAYYVFYI) the chain is on the extracellular side. N-linked (GlcNAc...) asparagine glycosylation is found at Asn-895 and Asn-901. A discontinuously helical membrane pass occupies residues 920–940 (YVGVADGLLALGLFRGLPLVH). Residues 941–991 (TLITVSKILHRKMLHSVLQAPMSTLNTLKAGGILNRFSKDIAVLDDLLPLT) lie on the Cytoplasmic side of the membrane. The helical transmembrane segment at 992–1012 (IFDFIQLLLIVIGAVAVVSVL) threads the bilayer. Topologically, residues 1013–1014 (KP) are extracellular. The chain crosses the membrane as a helical span at residues 1015 to 1035 (YIFLATVPVIVAFILLRAYFL). The Cytoplasmic portion of the chain corresponds to 1036–1096 (HTSQQLKQLE…TANWFLYLST (61 aa)). The helical transmembrane segment at 1097-1117 (LRWFQMRIEMIFVIFFIAVTF) threads the bilayer. The Extracellular segment spans residues 1118-1131 (ISILTTGEGEGTVG). The chain crosses the membrane as a helical span at residues 1132-1152 (IILTLAMNIMSTLQWAVNSSI). The Cytoplasmic segment spans residues 1153–1482 (DVDSLMRSVS…TEEEVQETRL (330 aa)). The region spanning 1212 to 1445 (MTVKDLTAKY…KSLFRQAISP (234 aa)) is the ABC transporter 2 domain. ATP is bound by residues Tyr-1221 and 1246-1253 (GRTGSGKS). The interaction with GORASP2 stretch occupies residues 1388–1482 (RTLKQAFADC…TEEEVQETRL (95 aa)). Residue Cys-1397 is the site of S-palmitoyl cysteine attachment. A compositionally biased stretch (basic residues) spans 1454 to 1464 (HRNSSKQRSRS). The segment at 1454 to 1482 (HRNSSKQRSRSKIAALKEETEEEVQETRL) is disordered. At Ser-1458 the chain carries Phosphoserine. Residues 1472-1482 (ETEEEVQETRL) are compositionally biased toward acidic residues. Residues 1480–1482 (TRL) carry the PDZ-binding motif.

Belongs to the ABC transporter superfamily. ABCC family. CFTR transporter (TC 3.A.1.202) subfamily. Monomer; does not require oligomerization for channel activity. May form oligomers in the membrane. Interacts with SLC26A3, SLC26A6 and NHERF1. Interacts with SHANK2. Interacts with MYO6. Interacts (via C-terminus) with GOPC (via PDZ domain); this promotes CFTR internalization and thereby decreases channel activity. Interacts with SLC4A7 through NHERF1. Found in a complex with MYO5B and RAB11A. Interacts with ANO1. Interacts with SLC26A8. Interacts with AHCYL1; the interaction increases CFTR activity. Interacts with CSE1L. The core-glycosylated form interacts with GORASP2 (via PDZ GRASP-type 1 domain) in respone to ER stress. Interacts with MARCHF2; the interaction leads to CFTR ubiqtuitination and degradation. Interacts with ADGRG2. N-glycosylated. Post-translationally, phosphorylated; cAMP treatment promotes phosphorylation and activates the channel. Dephosphorylation decreases the ATPase activity (in vitro). Phosphorylation at PKA sites activates the channel. Phosphorylation at PKC sites enhances the response to phosphorylation by PKA. Phosphorylated by AMPK; this inhibits channel activity. In terms of processing, ubiquitinated, leading to its degradation in the lysosome. Deubiquitination by USP10 in early endosomes enhances its endocytic recycling to the cell membrane. Ubiquitinated by RNF185 during ER stress. Ubiquitinated by MARCHF2.

The protein resides in the apical cell membrane. The protein localises to the early endosome membrane. It is found in the cell membrane. Its subcellular location is the recycling endosome membrane. It localises to the endoplasmic reticulum membrane. The protein resides in the nucleus. It catalyses the reaction ATP + H2O + closed Cl(-) channel = ADP + phosphate + open Cl(-) channel.. The enzyme catalyses chloride(in) = chloride(out). The catalysed reaction is hydrogencarbonate(in) = hydrogencarbonate(out). It carries out the reaction ATP + H2O = ADP + phosphate + H(+). In terms of biological role, epithelial ion channel that plays an important role in the regulation of epithelial ion and water transport and fluid homeostasis. Mediates the transport of chloride ions across the cell membrane. Possesses an intrinsic ATPase activity and utilizes ATP to gate its channel; the passive flow of anions through the channel is gated by cycles of ATP binding and hydrolysis by the ATP-binding domains. The ion channel is also permeable to HCO(3)(-); selectivity depends on the extracellular chloride concentration. Exerts its function also by modulating the activity of other ion channels and transporters. Contributes to the regulation of the pH and the ion content of the epithelial fluid layer. Modulates the activity of the epithelial sodium channel (ENaC) complex, in part by regulating the cell surface expression of the ENaC complex. May regulate bicarbonate secretion and salvage in epithelial cells by regulating the transporter SLC4A7. Can inhibit the chloride channel activity of ANO1. Plays a role in the chloride and bicarbonate homeostasis during sperm epididymal maturation and capacitation. This is Cystic fibrosis transmembrane conductance regulator from Sus scrofa (Pig).